Consider the following 194-residue polypeptide: Large ribosomal subunit protein bL27c (194 aa).

Residues 1 to 57 (MAVTTSMSFNLMASFRGMSLSSSSSSSFFKGEFGPSSLRLPNKSPLSVSPFPLTIES) constitute a chloroplast transit peptide. The tract at residues 57 to 76 (SAHKKGAGSTKNGRDSKGQR) is disordered.

In terms of assembly, component of the chloroplast large ribosomal subunit (LSU). Mature 70S chloroplast ribosomes of higher plants consist of a small (30S) and a large (50S) subunit. The 30S small subunit contains 1 molecule of ribosomal RNA (16S rRNA) and 24 different proteins. The 50S large subunit contains 3 rRNA molecules (23S, 5S and 4.5S rRNA) and 33 different proteins.

The protein localises to the plastid. It is found in the chloroplast. Component of the chloroplast ribosome (chloro-ribosome), a dedicated translation machinery responsible for the synthesis of chloroplast genome-encoded proteins, including proteins of the transcription and translation machinery and components of the photosynthetic apparatus. The sequence is that of Large ribosomal subunit protein bL27c (RPL27) from Spinacia oleracea (Spinach).